The chain runs to 544 residues: uncharacterized protein (544 aa).

The signal sequence occupies residues 1–34 (MIARRMLCARPWGPSCVVCALCGALAALVPAVGA). Residues 38-69 (AVPAPGTPAPPAHTASEAVPPAPEPRAEGEQP) are disordered.

This sequence belongs to the TP096X family.

This is an uncharacterized protein from Treponema pallidum (strain Nichols).